The following is a 64-amino-acid chain: Large ribosomal subunit protein bL35 (64 aa).

The protein belongs to the bacterial ribosomal protein bL35 family.

This Shewanella baltica (strain OS223) protein is Large ribosomal subunit protein bL35.